Here is a 318-residue protein sequence, read N- to C-terminus: tRNA uridine(34) hydroxylase (318 aa).

The Rhodanese domain occupies 123–217 (EDDDTVIIDA…YGKDPETKGQ (95 aa)). The Cysteine persulfide intermediate role is filled by C177.

Belongs to the TrhO family.

The catalysed reaction is uridine(34) in tRNA + AH2 + O2 = 5-hydroxyuridine(34) in tRNA + A + H2O. In terms of biological role, catalyzes oxygen-dependent 5-hydroxyuridine (ho5U) modification at position 34 in tRNAs. The chain is tRNA uridine(34) hydroxylase from Staphylococcus aureus (strain Mu3 / ATCC 700698).